The sequence spans 1164 residues: Auxin response factor 7 (1164 aa).

Positions 127–229 form a DNA-binding region, TF-B3; that stretch reads FCKTLTASDT…QLLLGIRRAN (103 aa). 5 disordered regions span residues 451–505, 536–555, 570–728, 765–858, and 903–930; these read HNNL…QQQL, QQLQ…QQQQ, HQQP…LLQQ, FLSP…SSSG, and KSKA…GENN. Over residues 464–489 the composition is skewed to polar residues; sequence LSFQTPHGGISSSNLQFNKQNQQAPM. Over residues 570 to 635 the composition is skewed to low complexity; it reads HQQPLQQQTQ…SQQASTHHLQ (66 aa). A compositionally biased stretch (polar residues) spans 637–651; that stretch reads QLVSGSMASSVITPP. A compositionally biased stretch (low complexity) spans 652 to 671; the sequence is SSSLNQSFQQQQQQSKQLQQ. The span at 678 to 710 shows a compositional bias: polar residues; sequence ASTSQSSVIETSKSSSNLMSAPPQETQFSRQVE. 2 stretches are compositionally biased toward low complexity: residues 711 to 728 and 765 to 790; these read QQQP…LLQQ and FLSP…TLSQ. A compositionally biased stretch (polar residues) spans 791 to 808; sequence GHQFPSSCTNNGLSTLQP. Residues 841-851 are compositionally biased toward low complexity; that stretch reads PSSSTSPSTNN. Polar residues predominate over residues 903–921; it reads KSKASLTDHQLEASASGTS. Residues 1037-1130 enclose the PB1 domain; it reads RTYTKVQKRG…EVQQMSLDGN (94 aa). Positions 1145 to 1164 are disordered; sequence DSGNAWRGHYDDNSATSFNR.

This sequence belongs to the ARF family. Homodimers and heterodimers. Interacts with the auxin-responsive proteins IAA1 and IAA12 (BODENLOS). Interacts (via PB1 domain) with IAA17 (via PB1 domain). Interacts with IAA19. Interacts with ARF5. Binds to JMJ30. Binds to ATXR2 in the nucleus. Expressed in the whole plant.

It is found in the nucleus. In terms of biological role, auxin response factors (ARFs) are transcriptional factors that bind specifically to the DNA sequence 5'-TGTCTC-3' found in the auxin-responsive promoter elements (AuxREs). Acts as a transcriptional activator of several tropic stimulus-induced (TSI) genes, including SAUR50. Formation of heterodimers with Aux/IAA proteins may alter their ability to modulate early auxin response genes expression. Required for differential growth responses of aerial tissues. Involved in ethylene responses. Regulates lateral root formation through direct regulation of LBD16 and/or LBD29. Functionally redundant with ARF19. Mediates embryo axis formation and vascular tissues differentiation. Functionally redundant with ARF5. Involved in cellular dedifferentiation during callus formation on callus-inducing medium (CIM) and in an ATXR2-dependent manner. This Arabidopsis thaliana (Mouse-ear cress) protein is Auxin response factor 7.